A 99-amino-acid chain; its full sequence is NADH-quinone oxidoreductase subunit K (99 aa).

The next 3 helical transmembrane spans lie at 3–23 (PANYLYLSALLFTIGASGVLL), 28–48 (IVMFMCVELMLNAVNLAFVTF), and 59–79 (MIAFFTMVVAACEVVVGLAII).

This sequence belongs to the complex I subunit 4L family. NDH-1 is composed of 14 different subunits. Subunits NuoA, H, J, K, L, M, N constitute the membrane sector of the complex.

The protein resides in the cell membrane. The enzyme catalyses a quinone + NADH + 5 H(+)(in) = a quinol + NAD(+) + 4 H(+)(out). Its function is as follows. NDH-1 shuttles electrons from NADH, via FMN and iron-sulfur (Fe-S) centers, to quinones in the respiratory chain. The immediate electron acceptor for the enzyme in this species is believed to be a menaquinone. Couples the redox reaction to proton translocation (for every two electrons transferred, four hydrogen ions are translocated across the cytoplasmic membrane), and thus conserves the redox energy in a proton gradient. The protein is NADH-quinone oxidoreductase subunit K of Mycobacterium marinum (strain ATCC BAA-535 / M).